Here is a 339-residue protein sequence, read N- to C-terminus: MKNILVTGGTGFIGSHTVVSLLKSGHQVVILDNLCNSSINILPRLKTITGQEIPFYQGDIRDREILRRIFAENRIDSVIHFAGLKAVGESVAEPMKYYDNNVSGSLVLAEEMARAGVFSIVFSSSATVYGDPGKVPYTEDMPLGDTTSPYGTSKSMVERILTDIQKADPRWSMILLRYFNPIGAHESGLIGEQPNGIPNNLLPYICQVASGRLPQLSVFGGDYPTPDGTGMRDYIHVMDLAEGHVAAMQAKSNVAGTHLLNLGSGRASSVLEIIRAFEAASGLTIPYEVKPRRAGDLACFYADPSYTKAQIGWQTQRDLAQMMEDSWRWVSNNPNGYDD.

Residues 12 to 13, 32 to 37, 59 to 60, 81 to 85, Asn100, Ser125, Tyr150, Lys154, and Phe179 contribute to the NAD(+) site; these read FI, DNLCNS, DI, and FAGLK. Ser125 and Tyr150 together coordinate substrate. The active-site Proton acceptor is the Tyr150. Residues Asn180, 200 to 201, 217 to 219, Arg232, and 293 to 296 each bind substrate; these read NL, SVF, and RAGD.

It belongs to the NAD(P)-dependent epimerase/dehydratase family. In terms of assembly, homodimer. Requires NAD(+) as cofactor.

It carries out the reaction UDP-alpha-D-glucose = UDP-alpha-D-galactose. Its pathway is carbohydrate metabolism; galactose metabolism. In terms of biological role, involved in the metabolism of galactose. Plays an essential role in the incorporation of galactose into meningococcal lipopolysaccharide surface molecules, which are important for pathogenesis. Catalyzes the conversion of UDP-galactose (UDP-Gal) to UDP-glucose (UDP-Glc) through a mechanism involving the transient reduction of NAD. This is UDP-glucose 4-epimerase (galE) from Neisseria meningitidis serogroup A / serotype 4A (strain DSM 15465 / Z2491).